The following is a 440-amino-acid chain: Glycerol-3-phosphate dehydrogenase [NAD(+)] 2, mitochondrial (440 aa).

The transit peptide at 1–16 (MLAVRRLTRYTFLKRT) directs the protein to the mitochondrion. Residues S70, S72, and S75 each carry the phosphoserine modification. NAD(+) contacts are provided by residues 90–95 (GSGNWG), F122, and F178. Residue K201 participates in substrate binding. A234 lines the NAD(+) pocket. The active-site Proton acceptor is K294. NAD(+) is bound by residues R359 and Q388. A substrate-binding site is contributed by 359 to 360 (RN).

Belongs to the NAD-dependent glycerol-3-phosphate dehydrogenase family.

It is found in the cytoplasm. The protein resides in the mitochondrion. It carries out the reaction sn-glycerol 3-phosphate + NAD(+) = dihydroxyacetone phosphate + NADH + H(+). Its function is as follows. Catalyzes the production of glycerol under anaerobic growth conditions. Glycerol production serves as a redox sink by consuming the excess cytosolic NADH during anaerobic metabolism. In Saccharomyces cerevisiae (strain ATCC 204508 / S288c) (Baker's yeast), this protein is Glycerol-3-phosphate dehydrogenase [NAD(+)] 2, mitochondrial.